Reading from the N-terminus, the 629-residue chain is Transferrin (629 aa).

The signal sequence occupies residues 1 to 21 (MTIKNVLKLAALLGVLALVQA). Transferrin-like domains are found at residues 26–366 (YRMC…ERDG) and 372–621 (MKMC…GLKC). Cystine bridges form between cysteine 29–cysteine 63 and cysteine 38–cysteine 54. Tyrosine 111 is a Fe(3+) binding site. Intrachain disulfides connect cysteine 135–cysteine 231, cysteine 184–cysteine 210, cysteine 207–cysteine 216, cysteine 270–cysteine 283, cysteine 375–cysteine 409, and cysteine 385–cysteine 403. The hydrogencarbonate site is built by threonine 137, arginine 141, valine 143, and glycine 144. Residue tyrosine 225 coordinates Fe(3+). Aspartate 408 and histidine 561 together coordinate Fe(3+).

This sequence belongs to the transferrin family. In terms of assembly, monomer.

In terms of biological role, transferrins are iron binding transport proteins which bind Fe(3+) ion in association with the binding of an anion, usually bicarbonate. This transferrin binds only one Fe(3+) ion per protein molecule. Transports iron ions from the hemolymph into the eggs during the vitellogenic stage (oogenesis). The chain is Transferrin from Sarcophaga peregrina (Flesh fly).